Consider the following 198-residue polypeptide: Putative pseudouridine methyltransferase (198 aa).

S-adenosyl-L-methionine is bound by residues Leu-132 and Cys-186.

This sequence belongs to the methyltransferase superfamily. TrmY family.

It localises to the cytoplasm. The chain is Putative pseudouridine methyltransferase from Shewanella frigidimarina (strain NCIMB 400).